A 277-amino-acid polypeptide reads, in one-letter code: Sulfur carrier protein FdhD (277 aa).

Residue C121 is the Cysteine persulfide intermediate of the active site. Position 260–265 (260–265) interacts with Mo-bis(molybdopterin guanine dinucleotide); sequence FCKPGR.

It belongs to the FdhD family.

The protein resides in the cytoplasm. Required for formate dehydrogenase (FDH) activity. Acts as a sulfur carrier protein that transfers sulfur from IscS to the molybdenum cofactor prior to its insertion into FDH. This chain is Sulfur carrier protein FdhD, found in Escherichia coli O8 (strain IAI1).